The following is a 97-amino-acid chain: Stefin-1 (97 aa).

The Secondary area of contact motif lies at 46-50 (QVVAG).

It belongs to the cystatin family.

The protein resides in the cytoplasm. This is an intracellular thiol proteinase inhibitor. In Mus musculus (Mouse), this protein is Stefin-1 (Stfa1).